The chain runs to 413 residues: Patatin-like protein 3 (413 aa).

The 192-residue stretch at 54–245 (LSVDGGARPE…ALGNPTAAAI (192 aa)) folds into the PNPLA domain. The GGXR motif lies at 58–61 (GGAR). The active-site Nucleophile is the Ser100. Residues 384 to 413 (EHGRRKQHVPPAASGGGGGGLDCHVSKKQP) form a disordered region.

The protein belongs to the patatin family.

Possesses non-specific lipolytic acyl hydrolase (LAH) activity. Hydrolyzes phospholipids as well as galactolipids. May play a role in disease resistance. The chain is Patatin-like protein 3 (PLP3) from Oryza sativa subsp. indica (Rice).